We begin with the raw amino-acid sequence, 215 residues long: RNA pyrophosphohydrolase (215 aa).

The region spanning 6–149 is the Nudix hydrolase domain; sequence GFRPNVGIIL…KRDVYQLALT (144 aa). The Nudix box signature appears at 38–59; the sequence is GGIKYGETPMQAMYRELHEETG.

It belongs to the Nudix hydrolase family. RppH subfamily. A divalent metal cation serves as cofactor.

Accelerates the degradation of transcripts by removing pyrophosphate from the 5'-end of triphosphorylated RNA, leading to a more labile monophosphorylated state that can stimulate subsequent ribonuclease cleavage. This is RNA pyrophosphohydrolase from Burkholderia vietnamiensis (strain G4 / LMG 22486) (Burkholderia cepacia (strain R1808)).